A 508-amino-acid polypeptide reads, in one-letter code: MVTIQADEISNIIRERIEQYNREVKIVNTGTVLQVGDGIARIHGLDEVMAGELVEFEEGTIGIALNLESTNVGVVLMGDGLLIQEGSSVKATGRIAQIPVSEAYLGRVINALAKPIDGRGEISSSEYRLIESPAPGIISRRSVYEPLQTGLIAIDSMIPIGRGQRELIIGDRQTGKTAVATDTILNQQGKNVICVYVAIGQKASSVAQVVTNFQERGAMEYTIVVAETADSPATLQYLAPYTGAALAEYFMYRERHTSIIYDDPSKQAQAYRQMSLLLRRPPGREAYPGDVFYLHSRLLERAAKLSSLLGEGSMTALPIVETQSGDVSAYIPTNVISITDGQIFLSADLFNAGIRPAINVGISVSRVGSAAQIKAMKQVAGKLKLELAQFAELEAFAQFASDLDKATQNQLARGQRLRELLKQSQSAPLGVEEQVLTIYTGTNGYLDSLEIGQVRKFLVELRTYLKTNKPQFQEIISSTKTFTEEAEAILKEAIKEQRERFILQEQAA.

Residue 170–177 coordinates ATP; the sequence is GDRQTGKT.

It belongs to the ATPase alpha/beta chains family. In terms of assembly, F-type ATPases have 2 components, CF(1) - the catalytic core - and CF(0) - the membrane proton channel. CF(1) has five subunits: alpha(3), beta(3), gamma(1), delta(1), epsilon(1). CF(0) has four main subunits: a, b, b' and c.

The protein resides in the plastid. It localises to the chloroplast thylakoid membrane. The enzyme catalyses ATP + H2O + 4 H(+)(in) = ADP + phosphate + 5 H(+)(out). Functionally, produces ATP from ADP in the presence of a proton gradient across the membrane. The alpha chain is a regulatory subunit. This chain is ATP synthase subunit alpha, chloroplastic, found in Lactuca sativa (Garden lettuce).